Consider the following 206-residue polypeptide: MARYIGPKLKLSRREGTDLFLKSGVRAIDSKCKIDTAPGQHGARKARLSDYGVQLREKQKVRRIYGVLEKQFRNYYRDAARQKGNTGENLLQLLEGRLDNVVYRMGFGATRAESRQLVSHKAIMVNGRVVNIPSFQVSPEDVVCVREKAKKQARIKASLEVAGQREKPTWVEVDTAKMEGAFKRLPERSDLSADINEQLIVELYSK.

The S4 RNA-binding domain occupies 96–156 (GRLDNVVYRM…EKAKKQARIK (61 aa)).

The protein belongs to the universal ribosomal protein uS4 family. Part of the 30S ribosomal subunit. Contacts protein S5. The interaction surface between S4 and S5 is involved in control of translational fidelity.

Functionally, one of the primary rRNA binding proteins, it binds directly to 16S rRNA where it nucleates assembly of the body of the 30S subunit. Its function is as follows. With S5 and S12 plays an important role in translational accuracy. The protein is Small ribosomal subunit protein uS4 of Aeromonas salmonicida (strain A449).